Reading from the N-terminus, the 460-residue chain is Argininosuccinate lyase (460 aa).

Belongs to the lyase 1 family. Argininosuccinate lyase subfamily.

The protein resides in the cytoplasm. It catalyses the reaction 2-(N(omega)-L-arginino)succinate = fumarate + L-arginine. Its pathway is amino-acid biosynthesis; L-arginine biosynthesis; L-arginine from L-ornithine and carbamoyl phosphate: step 3/3. In Alkaliphilus metalliredigens (strain QYMF), this protein is Argininosuccinate lyase.